The following is a 142-amino-acid chain: Large ribosomal subunit protein uL13 (142 aa).

This sequence belongs to the universal ribosomal protein uL13 family. As to quaternary structure, part of the 50S ribosomal subunit.

Its function is as follows. This protein is one of the early assembly proteins of the 50S ribosomal subunit, although it is not seen to bind rRNA by itself. It is important during the early stages of 50S assembly. The polypeptide is Large ribosomal subunit protein uL13 (Yersinia pseudotuberculosis serotype O:1b (strain IP 31758)).